We begin with the raw amino-acid sequence, 350 residues long: Twinfilin-1 (350 aa).

N-acetylserine is present on serine 2. Residues 2–139 (SHQTGIQASE…SLHGYRKYLL (138 aa)) enclose the ADF-H 1 domain. 2 positions are modified to phosphoserine: serine 143 and serine 277. Residues 175–313 (LQGVAFPISR…TADFLYDEVH (139 aa)) enclose the ADF-H 2 domain. Tyrosine 309 is subject to Phosphotyrosine. The tract at residues 316-350 (QHAHKQSFAKPKGPAGKRGIRRLIRGPAEAEATTD) is disordered. Residue threonine 349 is modified to Phosphothreonine.

It belongs to the actin-binding proteins ADF family. Twinfilin subfamily. As to quaternary structure, interacts with G-actin; ADP-actin form and capping protein (CP). May also be able to interact with TWF2 and phosphoinositides, PI(4,5)P2. When bound to PI(4,5)P2, it is down-regulated. Interacts with ACTG1. In terms of processing, phosphorylated on serine and threonine residues.

The protein resides in the cytoplasm. Its subcellular location is the cytoskeleton. In terms of biological role, actin-binding protein involved in motile and morphological processes. Inhibits actin polymerization, likely by sequestering G-actin. By capping the barbed ends of filaments, it also regulates motility. Seems to play an important role in clathrin-mediated endocytosis and distribution of endocytic organelles. The chain is Twinfilin-1 (Twf1) from Rattus norvegicus (Rat).